An 80-amino-acid polypeptide reads, in one-letter code: Histone H1.M6.1 (80 aa).

The tract at residues 1 to 80 (MSDAAVPPKK…KAVKKAPKKK (80 aa)) is disordered. Residues 11–80 (ASPKKAAAKK…KAVKKAPKKK (70 aa)) show a composition bias toward basic residues.

Its subcellular location is the nucleus. It localises to the chromosome. In Trypanosoma cruzi, this protein is Histone H1.M6.1.